A 568-amino-acid chain; its full sequence is MGMVGRDIDDLPKNAANYTALTPLWFLERAATVHPTRTSVIHGSRHYTWLQTYHRCRQFASALNNHSIGLGSTVAVIAPNVPALYEAHFAVPMAGAVVNCVNIRLNASTIAFLLGHSSAAAVMVDQEFFSLAEEALKILAQESKSHYKPPLLVVIGDESCDPKTLEYALKTGAIEYEKFLEGGDPEFDWKPPEDEWQSISLGYTSGTTASPKGVVLSHRGAYLMSLSASVVWGINEGAIYLWTLPMFHCNGWCYTWGMAAFCGTNICLRQVTAKGVYSAIAKYGVTHFCAAPVVLNTIVNAPPEEAIIPLPHLVHVMTAGAAPPPSVLFAMSEKGFKVAHTYGLSETYGPSTICAWKPEWDSLPPIKQARLNARQGVRYIALEGLDVVDTKTMKPVPADGTTMGEIVMRGNAVMKGYLKNPKANEESFADGWFHSGDLAVKHPDGYIEIKDRSKDIIISGGENISSLEVENTLYLHPAVLEVSVVARPDERWGESPCAFVTLKPNIDKSNEQVLAEDIIKFCKSKMPAYWVPKSVVFGPLPKTATGKIQKHVLRAKAKEMGALKKSNL.

ATP contacts are provided by residues 204-212 (TSGTTASPK), 340-345 (HTYGLS), D437, 449-452 (IKDR), and K547. The interval 272-340 (TAKGVYSAIA…MSEKGFKVAH (69 aa)) is SBD1. Positions 341-417 (TYGLSETYGP…MRGNAVMKGY (77 aa)) are SBD2.

This sequence belongs to the ATP-dependent AMP-binding enzyme family. Mostly expressed in glandular trichomes (lupulin glands) after flowering and in old leaves, and, to a lower extent, in stems, young leaves, cones and flowers.

Its subcellular location is the cytoplasm. It localises to the cytosol. The enzyme catalyses acetate + ATP + CoA = acetyl-CoA + AMP + diphosphate. It carries out the reaction propanoate + ATP + CoA = propanoyl-CoA + AMP + diphosphate. It catalyses the reaction butanoate + ATP + CoA = butanoyl-CoA + AMP + diphosphate. The catalysed reaction is 3-methylbutanoate + ATP + CoA = 3-methylbutanoyl-CoA + AMP + diphosphate. The enzyme catalyses pentanoate + ATP + CoA = pentanoyl-CoA + AMP + diphosphate. It carries out the reaction hexanoate + ATP + CoA = hexanoyl-CoA + AMP + diphosphate. It catalyses the reaction 2-methylpropanoate + ATP + CoA = 2-methylpropanoyl-CoA + AMP + diphosphate. The catalysed reaction is 2-methylbutanoate + ATP + CoA = 2-methylbutanoyl-CoA + AMP + diphosphate. The enzyme catalyses 2-methylpentanoate + ATP + CoA = 2-methylpentanoyl-CoA + AMP + diphosphate. It carries out the reaction 3-methylpentanoate + ATP + CoA = 3-methylpentanoyl-CoA + AMP + diphosphate. It catalyses the reaction 4-methylpentanoate + ATP + CoA = 4-methylpentanoyl-CoA + AMP + diphosphate. Its pathway is secondary metabolite biosynthesis. Its function is as follows. Involved in the biosynthesis of prenylated phenolics natural products which contribute to the bitter taste of beer and display broad biological activities. Catalyzes the ligation of CoA on propanoate to produce propanoyl-CoA. Can also use 2-methylpropanoate (isobutyric acid), acetate, butanoate, isovalerate, pentanoate, hexanoate, 2-methylbutanoate, 2-methylpentanoate, 3-methylpentanoate and 4-methylpentanoate as substrates with a lower efficiency. Triggers the formation of very short chain acyl-CoAs from the corresponding fatty acids, including acetic acid, propanoic acid, butyric acid and its isomer. The polypeptide is Acetate--CoA ligase CCL3 (Humulus lupulus (European hop)).